The chain runs to 246 residues: UDP-N-acetyl-D-mannosaminuronic acid transferase (246 aa).

This sequence belongs to the glycosyltransferase 26 family.

The enzyme catalyses UDP-N-acetyl-alpha-D-mannosaminouronate + N-acetyl-alpha-D-glucosaminyl-di-trans,octa-cis-undecaprenyl diphosphate = beta-D-ManNAcA-(1-&gt;4)-alpha-D-GlcNAc-di-trans,octa-cis-undecaprenyl diphosphate + UDP + H(+). It functions in the pathway bacterial outer membrane biogenesis; enterobacterial common antigen biosynthesis. In terms of biological role, catalyzes the synthesis of Und-PP-GlcNAc-ManNAcA (Lipid II), the second lipid-linked intermediate involved in enterobacterial common antigen (ECA) synthesis. In Yersinia pestis bv. Antiqua (strain Antiqua), this protein is UDP-N-acetyl-D-mannosaminuronic acid transferase.